Reading from the N-terminus, the 69-residue chain is Sperm protamine P1 (69 aa).

Composition is skewed to basic residues over residues 1–30 (MARFRPSRSRSRSLYRRRRRSRRQRSRRGG) and 37–69 (KITRRGRGRGKSRRRRGRRSMRSSRRRRRRRRN). Positions 1 to 69 (MARFRPSRSR…SRRRRRRRRN (69 aa)) are disordered.

Belongs to the protamine P1 family. Testis.

Its subcellular location is the nucleus. It is found in the chromosome. Functionally, protamines substitute for histones in the chromatin of sperm during the haploid phase of spermatogenesis. They compact sperm DNA into a highly condensed, stable and inactive complex. The polypeptide is Sperm protamine P1 (PRM1) (Tachyglossus aculeatus aculeatus (Southeast Australian short-beaked echidna)).